The primary structure comprises 361 residues: Beta-hexosaminidase (361 aa).

Substrate is bound by residues aspartate 69, arginine 77, arginine 144, and 174-175 (KH). Histidine 187 serves as the catalytic Proton donor/acceptor. Catalysis depends on aspartate 258, which acts as the Nucleophile.

The protein belongs to the glycosyl hydrolase 3 family. NagZ subfamily.

It is found in the cytoplasm. It catalyses the reaction Hydrolysis of terminal non-reducing N-acetyl-D-hexosamine residues in N-acetyl-beta-D-hexosaminides.. It participates in cell wall biogenesis; peptidoglycan recycling. In terms of biological role, plays a role in peptidoglycan recycling by cleaving the terminal beta-1,4-linked N-acetylglucosamine (GlcNAc) from peptide-linked peptidoglycan fragments, giving rise to free GlcNAc, anhydro-N-acetylmuramic acid and anhydro-N-acetylmuramic acid-linked peptides. The sequence is that of Beta-hexosaminidase from Neisseria meningitidis serogroup B (strain ATCC BAA-335 / MC58).